We begin with the raw amino-acid sequence, 375 residues long: Alcohol dehydrogenase 1 (375 aa).

Ser1 carries the post-translational modification N-acetylserine. The Zn(2+) site is built by Cys46, His67, Cys97, Cys100, Cys103, Cys111, and Cys174. NAD(+)-binding positions include 199–204 (GLGGVG), Asp223, Lys228, 293–295 (VGV), and Arg370.

This sequence belongs to the zinc-containing alcohol dehydrogenase family. Class-I subfamily. In terms of assembly, homodimer. Requires Zn(2+) as cofactor.

It localises to the cytoplasm. The enzyme catalyses a primary alcohol + NAD(+) = an aldehyde + NADH + H(+). The catalysed reaction is a secondary alcohol + NAD(+) = a ketone + NADH + H(+). The chain is Alcohol dehydrogenase 1 from Naja naja (Indian cobra).